The following is a 90-amino-acid chain: Large ribosomal subunit protein eL37 (90 aa).

An A20-type zinc finger spans residues 13-46; sequence NKSHTLCNRCGRRSFHVQKKTCSSCGYPAAKMRS. Residues Cys19, Cys22, Cys34, and Cys37 each contribute to the Zn(2+) site.

It belongs to the eukaryotic ribosomal protein eL37 family. Component of the large ribosomal subunit. Mature ribosomes consist of a small (40S) and a large (60S) subunit. The 40S subunit contains about 32 different proteins and 1 molecule of RNA (18S). The 60S subunit contains 45 different proteins and 3 molecules of RNA (25S, 5.8S and 5S). Requires Zn(2+) as cofactor.

The protein localises to the cytoplasm. Functionally, component of the ribosome, a large ribonucleoprotein complex responsible for the synthesis of proteins in the cell. The small ribosomal subunit (SSU) binds messenger RNAs (mRNAs) and translates the encoded message by selecting cognate aminoacyl-transfer RNA (tRNA) molecules. The large subunit (LSU) contains the ribosomal catalytic site termed the peptidyl transferase center (PTC), which catalyzes the formation of peptide bonds, thereby polymerizing the amino acids delivered by tRNAs into a polypeptide chain. The nascent polypeptides leave the ribosome through a tunnel in the LSU and interact with protein factors that function in enzymatic processing, targeting, and the membrane insertion of nascent chains at the exit of the ribosomal tunnel. The protein is Large ribosomal subunit protein eL37 of Candida albicans (strain SC5314 / ATCC MYA-2876) (Yeast).